A 118-amino-acid polypeptide reads, in one-letter code: Small ribosomal subunit protein uS13 (118 aa).

The interval 92 to 118 (RRGLPVRGQRTKTNARTRKGPRKPIKK) is disordered.

The protein belongs to the universal ribosomal protein uS13 family. In terms of assembly, part of the 30S ribosomal subunit. Forms a loose heterodimer with protein S19. Forms two bridges to the 50S subunit in the 70S ribosome.

In terms of biological role, located at the top of the head of the 30S subunit, it contacts several helices of the 16S rRNA. In the 70S ribosome it contacts the 23S rRNA (bridge B1a) and protein L5 of the 50S subunit (bridge B1b), connecting the 2 subunits; these bridges are implicated in subunit movement. Contacts the tRNAs in the A and P-sites. In Pectobacterium carotovorum subsp. carotovorum (strain PC1), this protein is Small ribosomal subunit protein uS13.